A 162-amino-acid polypeptide reads, in one-letter code: NADH-quinone oxidoreductase subunit I (162 aa).

4Fe-4S ferredoxin-type domains follow at residues 52-82 (LRRYPNGEERCIACKLCEAICPAQAITIEAG) and 93-122 (TRYDIDMVKCIYCGFCQEACPVDAIVEGPN). Positions 62, 65, 68, 72, 102, 105, 108, and 112 each coordinate [4Fe-4S] cluster.

The protein belongs to the complex I 23 kDa subunit family. In terms of assembly, NDH-1 is composed of 14 different subunits. Subunits NuoA, H, J, K, L, M, N constitute the membrane sector of the complex. [4Fe-4S] cluster is required as a cofactor.

It is found in the cell inner membrane. It carries out the reaction a quinone + NADH + 5 H(+)(in) = a quinol + NAD(+) + 4 H(+)(out). NDH-1 shuttles electrons from NADH, via FMN and iron-sulfur (Fe-S) centers, to quinones in the respiratory chain. The immediate electron acceptor for the enzyme in this species is believed to be ubiquinone. Couples the redox reaction to proton translocation (for every two electrons transferred, four hydrogen ions are translocated across the cytoplasmic membrane), and thus conserves the redox energy in a proton gradient. The sequence is that of NADH-quinone oxidoreductase subunit I from Methylocella silvestris (strain DSM 15510 / CIP 108128 / LMG 27833 / NCIMB 13906 / BL2).